The following is a 953-amino-acid chain: Glutamate receptor 3.5 (953 aa).

The signal sequence occupies residues 1-29 (MGFFVMIRDVSMGFMLLCISALWVLPIQG). Residues 30-606 (AGRESFSRNS…SPWSFLKPFT (577 aa)) are Extracellular-facing. N-linked (GlcNAc...) asparagine glycans are attached at residues Asn38, Asn95, Asn223, Asn371, Asn397, Asn436, Asn454, and Asn569. A helical transmembrane segment spans residues 607 to 627 (IEMWAVTGALFLFVGAVIWIL). Residues 628–636 (EHRFNEEFR) lie on the Cytoplasmic side of the membrane. Residues 637–657 (GPPRRQIITVFWFSFSTMFFS) form a helical membrane-spanning segment. Residues 658 to 668 (HRENTVSTLGR) lie on the Cytoplasmic side of the membrane. A helical transmembrane segment spans residues 669–689 (FVLLVWLFVVLIINSSYTASL). The Extracellular portion of the chain corresponds to 690–850 (TSILTVQQLT…TENYQISVQS (161 aa)). A helical transmembrane segment spans residues 851-871 (FWGLFLICGVVWFIALTLFCW). The Cytoplasmic portion of the chain corresponds to 872-953 (KVFWQYQRLR…SQSKDHETPQ (82 aa)). Residues 928–953 (EKSSKKLKDGQSSAENSQSKDHETPQ) are disordered.

It belongs to the glutamate-gated ion channel (TC 1.A.10.1) family. May form heteromers. As to expression, expressed predominantly in roots. Also detected in shoots.

It is found in the membrane. Functionally, glutamate-gated receptor that probably acts as a non-selective cation channel. May be involved in light-signal transduction and calcium homeostasis via the regulation of calcium influx into cells. The polypeptide is Glutamate receptor 3.5 (GLR3.5) (Arabidopsis thaliana (Mouse-ear cress)).